The primary structure comprises 108 residues: Ribonuclease P protein component (108 aa).

This sequence belongs to the RnpA family. In terms of assembly, consists of a catalytic RNA component (M1 or rnpB) and a protein subunit.

The enzyme catalyses Endonucleolytic cleavage of RNA, removing 5'-extranucleotides from tRNA precursor.. In terms of biological role, RNaseP catalyzes the removal of the 5'-leader sequence from pre-tRNA to produce the mature 5'-terminus. It can also cleave other RNA substrates such as 4.5S RNA. The protein component plays an auxiliary but essential role in vivo by binding to the 5'-leader sequence and broadening the substrate specificity of the ribozyme. The sequence is that of Ribonuclease P protein component from Campylobacter jejuni subsp. doylei (strain ATCC BAA-1458 / RM4099 / 269.97).